Here is a 163-residue protein sequence, read N- to C-terminus: Nucleotide-binding protein BcerKBAB4_1061 (163 aa).

Belongs to the YajQ family.

In terms of biological role, nucleotide-binding protein. The sequence is that of Nucleotide-binding protein BcerKBAB4_1061 from Bacillus mycoides (strain KBAB4) (Bacillus weihenstephanensis).